We begin with the raw amino-acid sequence, 103 residues long: Small ribosomal subunit protein uS10 (103 aa).

The protein belongs to the universal ribosomal protein uS10 family. As to quaternary structure, part of the 30S ribosomal subunit.

Involved in the binding of tRNA to the ribosomes. This Idiomarina loihiensis (strain ATCC BAA-735 / DSM 15497 / L2-TR) protein is Small ribosomal subunit protein uS10.